A 456-amino-acid chain; its full sequence is UPF0210 protein Dde_3704 (456 aa).

This sequence belongs to the UPF0210 family. As to quaternary structure, homodimer.

The sequence is that of UPF0210 protein Dde_3704 from Oleidesulfovibrio alaskensis (strain ATCC BAA-1058 / DSM 17464 / G20) (Desulfovibrio alaskensis).